The following is a 150-amino-acid chain: MDTLDEDQVQALQKAFNSFDTDDKGFITPDTVGVILRMMGVKISDRHLQEVISETDEDGSGEIEFEEFAALAAKFLSEEDEEALKKELKEAFRIYDRGGNGYITVHTLKEILRELDNKLTEDNLDSIIEEVDEDGSGTIDFNEFMKMMNG.

Met-1 carries the post-translational modification N-acetylmethionine. EF-hand domains follow at residues 7–42 (DQVQ…MGVK), 43–78 (ISDR…FLSE), 83–118 (ALKK…LDNK), and 119–150 (LTED…MMNG). Residues Asp-56, Asp-58, Ser-60, Glu-62, and Glu-67 each contribute to the Ca(2+) site. Residues Asp-132, Asp-134, Ser-136, Thr-138, and Glu-143 each coordinate Ca(2+).

The protein belongs to the troponin C family.

In terms of biological role, troponin is the central regulatory protein of striated muscle contraction. Tn consists of three components: Tn-I which is the inhibitor of actomyosin ATPase, Tn-T which contains the binding site for tropomyosin and Tn-C. The binding of calcium to Tn-C abolishes the inhibitory action of Tn on actin filaments. The sequence is that of Troponin C, isoform 1 from Homarus americanus (American lobster).